The chain runs to 115 residues: U3-lycotoxin-Ls1k (115 aa).

Residues 1 to 20 (MKFVLLFGVLLVTLFSYSSA) form the signal peptide. Positions 21 to 44 (EMLDDFDQADEDELLSLIEKEEAR) are excised as a propeptide. Cystine bridges form between cysteine 48-cysteine 63, cysteine 55-cysteine 72, cysteine 62-cysteine 87, and cysteine 74-cysteine 85.

The protein belongs to the neurotoxin 19 (CSTX) family. 01 subfamily. Expressed by the venom gland.

The protein resides in the secreted. The polypeptide is U3-lycotoxin-Ls1k (Lycosa singoriensis (Wolf spider)).